Here is a 278-residue protein sequence, read N- to C-terminus: MSAVIRVDSLNKTFARKQALFNLRLEIQAGEMVALIGASGSGKSTLLRHVAGLARCDRDNGGSIDVLGRRLQASGRLSGEVRRLRADIGYIFQQFNLVNRLSVLDNVLLGFLGRMPRWRGSLGLFSAEQKRQALEALARVGLADFAGQRASTLSGGQQQRVAIARALTQKAEVILADEPIASLDPESARKVMDILADINRHDGKTVVVTLHQVDYALRYCPRAVALKGGRILFDGSSEYLSEGFLNELYGAEGDTPLLFSDRARRGAESQPELTLARA.

Residues 5-253 (IRVDSLNKTF…FLNELYGAEG (249 aa)) enclose the ABC transporter domain. Position 37-44 (37-44 (GASGSGKS)) interacts with ATP.

It belongs to the ABC transporter superfamily. Phosphonates importer (TC 3.A.1.9.1) family. In terms of assembly, the complex is composed of two ATP-binding proteins (PhnC), two transmembrane proteins (PhnE) and a solute-binding protein (PhnD).

Its subcellular location is the cell inner membrane. The enzyme catalyses phosphonate(out) + ATP + H2O = phosphonate(in) + ADP + phosphate + H(+). Part of the ABC transporter complex PhnCDE involved in phosphonates import. Responsible for energy coupling to the transport system. This chain is Phosphonates import ATP-binding protein PhnC 2, found in Pseudomonas aeruginosa (strain ATCC 15692 / DSM 22644 / CIP 104116 / JCM 14847 / LMG 12228 / 1C / PRS 101 / PAO1).